The chain runs to 136 residues: MILGIGTDLCDIRRIESSLERFGDRFTHRVFTDGERGKCDQRAARGPSYARRFAAKEACAKALGTGMSQGVFWRDMEVVNLPSGQPTLNLTGGAREQLARMVPAGHEARLHLTLTDEPPLAQAFVIIEAVPITATS.

2 residues coordinate Mg(2+): Asp8 and Glu57.

Belongs to the P-Pant transferase superfamily. AcpS family. It depends on Mg(2+) as a cofactor.

It is found in the cytoplasm. The enzyme catalyses apo-[ACP] + CoA = holo-[ACP] + adenosine 3',5'-bisphosphate + H(+). In terms of biological role, transfers the 4'-phosphopantetheine moiety from coenzyme A to a Ser of acyl-carrier-protein. In Methylorubrum extorquens (strain PA1) (Methylobacterium extorquens), this protein is Holo-[acyl-carrier-protein] synthase.